Consider the following 350-residue polypeptide: Anthranilate phosphoribosyltransferase (350 aa).

5-phospho-alpha-D-ribose 1-diphosphate contacts are provided by residues Gly81, 84 to 85 (GD), Thr89, 91 to 94 (NIST), 109 to 117 (KHGGRSVSS), and Ser121. Gly81 serves as a coordination point for anthranilate. Ser93 contacts Mg(2+). Arg167 is an anthranilate binding site. Mg(2+) is bound by residues Asp230 and Glu231.

Belongs to the anthranilate phosphoribosyltransferase family. As to quaternary structure, homodimer. Mg(2+) is required as a cofactor.

The enzyme catalyses N-(5-phospho-beta-D-ribosyl)anthranilate + diphosphate = 5-phospho-alpha-D-ribose 1-diphosphate + anthranilate. Its pathway is amino-acid biosynthesis; L-tryptophan biosynthesis; L-tryptophan from chorismate: step 2/5. Its function is as follows. Catalyzes the transfer of the phosphoribosyl group of 5-phosphorylribose-1-pyrophosphate (PRPP) to anthranilate to yield N-(5'-phosphoribosyl)-anthranilate (PRA). The chain is Anthranilate phosphoribosyltransferase from Nitrosospira multiformis (strain ATCC 25196 / NCIMB 11849 / C 71).